The following is a 324-amino-acid chain: Geranylgeranyl diphosphate synthase (324 aa).

Residues lysine 46, arginine 49, and histidine 78 each contribute to the isopentenyl diphosphate site. Residues aspartate 85 and aspartate 89 each coordinate Mg(2+). Arginine 94 lines the an all-trans-polyprenyl diphosphate pocket. Arginine 95 provides a ligand contact to isopentenyl diphosphate. An all-trans-polyprenyl diphosphate contacts are provided by lysine 176, threonine 177, glutamine 214, lysine 231, and lysine 241.

It belongs to the FPP/GGPP synthase family. It depends on Mg(2+) as a cofactor.

It catalyses the reaction isopentenyl diphosphate + (2E,6E)-farnesyl diphosphate = (2E,6E,10E)-geranylgeranyl diphosphate + diphosphate. The protein operates within isoprenoid biosynthesis; geranylgeranyl diphosphate biosynthesis; geranylgeranyl diphosphate from farnesyl diphosphate and isopentenyl diphosphate: step 1/1. Catalyzes the sequential condensation of isopentenyl pyrophosphate with the allylic pyrophosphates to yield geranylgeranyl diphosphate (GGPP) which is a precursor of the ether-linked lipids. This chain is Geranylgeranyl diphosphate synthase, found in Methanosarcina mazei (strain ATCC BAA-159 / DSM 3647 / Goe1 / Go1 / JCM 11833 / OCM 88) (Methanosarcina frisia).